Reading from the N-terminus, the 253-residue chain is Uridylate kinase (253 aa).

Position 9 to 12 (9 to 12 (KLSG)) interacts with ATP. Position 51 (Gly-51) interacts with UMP. Gly-52 and Arg-56 together coordinate ATP. Residues Asp-72 and 133 to 140 (SGNPFFTT) contribute to the UMP site. Residues Thr-160, Tyr-166, and Asp-169 each contribute to the ATP site.

The protein belongs to the UMP kinase family. In terms of assembly, homohexamer.

It localises to the cytoplasm. It carries out the reaction UMP + ATP = UDP + ADP. It participates in pyrimidine metabolism; CTP biosynthesis via de novo pathway; UDP from UMP (UMPK route): step 1/1. Its activity is regulated as follows. Inhibited by UTP. In terms of biological role, catalyzes the reversible phosphorylation of UMP to UDP. This Synechococcus sp. (strain JA-2-3B'a(2-13)) (Cyanobacteria bacterium Yellowstone B-Prime) protein is Uridylate kinase.